The chain runs to 181 residues: MEPEIKIVNVVVSTQIGTDIDLEYAADILDNAEYEPEQFPGLVCRLSEPKVALLIFRSGKLNCTGAKCKEDAVIAIHKIIKELKEAGMDLIDNPEVNVQNMVATTELGMEPNLDDISTLECTEYEPEQFPGLVYRLSDPKVVVLIFGSGKVVITGLKVIEDAYKAYDKISKTLKELEEELY.

A run of 2 repeats spans residues 7-83 (IVNV…IKEL) and 98-173 (VQNM…SKTL).

This sequence belongs to the TBP family.

In terms of biological role, general factor that plays a role in the activation of archaeal genes transcribed by RNA polymerase. Binds specifically to the TATA box promoter element which lies close to the position of transcription initiation. The protein is TATA-box-binding protein of Methanococcus maripaludis (strain C6 / ATCC BAA-1332).